We begin with the raw amino-acid sequence, 4004 residues long: Hybrid PKS-NRPS synthetase mpsA (4004 aa).

The Ketosynthase family 3 (KS3) domain maps to 5–438; sequence NEPIAVIGSA…GANAHAILES (434 aa). Catalysis depends on for beta-ketoacyl synthase activity residues Cys178, His317, and His358. In terms of domain architecture, Malonyl-CoA:ACP transacylase (MAT) spans 544 to 867; that stretch reads VFTGQGAQWP…RGGDDVNAFS (324 aa). The segment at 933-1066 is N-terminal hotdog fold; that stretch reads HPILGVKSIE…GTISITLGIP (134 aa). The tract at residues 933-1233 is dehydratase (DH) domain; that stretch reads HPILGVKSIE…SMVPFSNATA (301 aa). Residues 933–1234 enclose the PKS/mFAS DH domain; the sequence is HPILGVKSIE…MVPFSNATAE (302 aa). His966 serves as the catalytic Proton acceptor; for dehydratase activity. The interval 1081 to 1234 is C-terminal hotdog fold; the sequence is MVDVEVDRFY…MVPFSNATAE (154 aa). The active-site Proton donor; for dehydratase activity is the Asp1141. The methyltransferase (MT) domain stretch occupies residues 1289–1575; that stretch reads EEEEQTLIHY…DTYAPNFDSL (287 aa). One can recognise a Ketoreductase (KR) domain in the interval 2102–2272; it reads TYFMVGLSGE…RRGLAASILG (171 aa). The 79-residue stretch at 2384–2462 folds into the Carrier 1 domain; it reads EVVEIMQAGF…DLLNDALDRL (79 aa). O-(pantetheine 4'-phosphoryl)serine is present on Ser2422. The disordered stretch occupies residues 2471-2540; the sequence is GADPSSVSRP…ERRAAELARK (70 aa). Over residues 2488–2500 the composition is skewed to low complexity; it reads PSVSRPASNAPPV. The segment covering 2514 to 2540 has biased composition (basic and acidic residues); sequence LKAEREREAEAKRKREEERRAAELARK. The segment at 2584 to 3019 is condensation (C) domain; sequence PMSFGQSRFW…RQCAERPGRE (436 aa). An adenylation (A) (KR) domain region spans residues 3060 to 3459; it reads KRHTASLAIK…GRIEGDTQIK (400 aa). The 78-residue stretch at 3570–3647 folds into the Carrier 2 domain; it reads ANLTPTESRL…GMARAIDDAT (78 aa). Ser3607 carries the post-translational modification O-(pantetheine 4'-phosphoryl)serine. Residues 3694–3924 are reductase (RED) domain; sequence LTIVLTGATG…VVEGVAQALF (231 aa).

It in the C-terminal section; belongs to the NRP synthetase family. Requires pantetheine 4'-phosphate as cofactor.

It participates in secondary metabolite biosynthesis. Its function is as follows. Hybrid PKS-NRPS synthetase; part of the gene cluster that mediates the biosynthesis of macrophasetins, 3-decalinoyltetramic acids (DTAs) which feature a tetramate (pyrrolidine-2,4-dione) unit connected to a decalin fragment and that have potent bioactivities. The PKS-NRPS mpsA together with its associated enoylreductase partner mpsG incorporate one unit of acetyl-CoA, seven units of malonyl-CoA, and one unit of L-alanine to assemble the linear tetramic acid intermediate corresponding to the backbone of macrophasetins. Without the Diels-Alderase mpsD, the mpsA/G product can undergo the non-enzymatic intramolecular Diels-Alder (IMDA) reaction to generate both macrophasetin A and macrophasetin B. Catalyzed by mpsD, the linear tetramic acid intermediate is thoroughly converted to macrophasetin A via the endo-IMDA reaction in a regioselective and stereoselective manner. Finally, the cytochrome P450 monooxygenase mpsF catalyzes the hydroxylation at C20 to yield the end product macrophasetin C. In Macrophomina phaseolina (strain MS6) (Charcoal rot fungus), this protein is Hybrid PKS-NRPS synthetase mpsA.